A 637-amino-acid chain; its full sequence is GTPase-activating protein GYP1 (637 aa).

A compositionally biased stretch (basic and acidic residues) spans 1–17; sequence MGVRSAAKEMHERDHNS. Disordered regions lie at residues 1 to 152 and 187 to 233; these read MGVR…GDRY and RTLS…NDSK. Residues 18–27 show a composition bias toward polar residues; it reads DSSSLVTSLM. Positions 28–45 are enriched in low complexity; it reads KSWRISSASSSKKPSLYK. The span at 46–59 shows a compositional bias: polar residues; sequence MNTTESTSLPSGYA. Position 69 is a phosphoserine (Ser69). Composition is skewed to polar residues over residues 79-91 and 98-107; these read QQAS…NSYS and PTLSTASNES. A compositionally biased stretch (basic residues) spans 115–127; that stretch reads RQHHQRHHHHQQP. Low complexity-rich tracts occupy residues 128–142 and 187–207; these read RHSS…CSNS and RTLS…MGTS. A compositionally biased stretch (polar residues) spans 208 to 223; that stretch reads AVRNSSSSFTYPQLPQ. Ser250 carries the post-translational modification Phosphoserine. One can recognise a Rab-GAP TBC domain in the interval 280-508; the sequence is GIPKIHRPVV…RMWDTYLSET (229 aa). The disordered stretch occupies residues 543–564; the sequence is DFQSPTTALSNMTPNNAVEDSG.

The protein localises to the golgi apparatus. It localises to the golgi stack. In terms of biological role, GTPase-activating protein (GAP) that stimulates specifically the intrinsic GTPase activity of Ypt/Rab-type GTPases YPT1 and YPT7. Functions on the Golgi as a negative regulator of YPT1. Functions on the vacuole as a negative regulator of YPT7. It is also active on SEC4 and YPT51. Provides a catalytic arginine (arginine finger) and glutamine (glutamine finger) in trans to accelerate the GTP hydrolysis rate of the substrate GTPase. This chain is GTPase-activating protein GYP1 (GYP1), found in Saccharomyces cerevisiae (strain ATCC 204508 / S288c) (Baker's yeast).